The following is a 341-amino-acid chain: Beta-ketoacyl-[acyl-carrier-protein] synthase III 1 (341 aa).

Catalysis depends on residues Cys-113 and His-249. The interval 250 to 254 (QANIR) is ACP-binding. The active site involves Asn-279.

This sequence belongs to the thiolase-like superfamily. FabH family. In terms of assembly, homodimer.

It localises to the cytoplasm. It carries out the reaction malonyl-[ACP] + acetyl-CoA + H(+) = 3-oxobutanoyl-[ACP] + CO2 + CoA. It participates in lipid metabolism; fatty acid biosynthesis. Functionally, catalyzes the condensation reaction of fatty acid synthesis by the addition to an acyl acceptor of two carbons from malonyl-ACP. Catalyzes the first condensation reaction which initiates fatty acid synthesis and may therefore play a role in governing the total rate of fatty acid production. Possesses both acetoacetyl-ACP synthase and acetyl transacylase activities. Its substrate specificity determines the biosynthesis of branched-chain and/or straight-chain of fatty acids. The chain is Beta-ketoacyl-[acyl-carrier-protein] synthase III 1 from Deinococcus radiodurans (strain ATCC 13939 / DSM 20539 / JCM 16871 / CCUG 27074 / LMG 4051 / NBRC 15346 / NCIMB 9279 / VKM B-1422 / R1).